The sequence spans 360 residues: UDP-N-acetylglucosamine--N-acetylmuramyl-(pentapeptide) pyrophosphoryl-undecaprenol N-acetylglucosamine transferase (360 aa).

UDP-N-acetyl-alpha-D-glucosamine-binding positions include 15–17, Asn-128, Arg-164, Ser-192, Ile-247, and Gln-292; that span reads TGG.

This sequence belongs to the glycosyltransferase 28 family. MurG subfamily.

It is found in the cell inner membrane. It carries out the reaction di-trans,octa-cis-undecaprenyl diphospho-N-acetyl-alpha-D-muramoyl-L-alanyl-D-glutamyl-meso-2,6-diaminopimeloyl-D-alanyl-D-alanine + UDP-N-acetyl-alpha-D-glucosamine = di-trans,octa-cis-undecaprenyl diphospho-[N-acetyl-alpha-D-glucosaminyl-(1-&gt;4)]-N-acetyl-alpha-D-muramoyl-L-alanyl-D-glutamyl-meso-2,6-diaminopimeloyl-D-alanyl-D-alanine + UDP + H(+). Its pathway is cell wall biogenesis; peptidoglycan biosynthesis. In terms of biological role, cell wall formation. Catalyzes the transfer of a GlcNAc subunit on undecaprenyl-pyrophosphoryl-MurNAc-pentapeptide (lipid intermediate I) to form undecaprenyl-pyrophosphoryl-MurNAc-(pentapeptide)GlcNAc (lipid intermediate II). The polypeptide is UDP-N-acetylglucosamine--N-acetylmuramyl-(pentapeptide) pyrophosphoryl-undecaprenol N-acetylglucosamine transferase (Blochmanniella floridana).